The sequence spans 206 residues: Guanylate kinase (206 aa).

Positions 5-183 (FNLLILSGPS…SKEIILSIAK (179 aa)) constitute a Guanylate kinase-like domain. Position 12 to 19 (12 to 19 (GPSGAGKS)) interacts with ATP.

Belongs to the guanylate kinase family.

Its subcellular location is the cytoplasm. The enzyme catalyses GMP + ATP = GDP + ADP. Functionally, essential for recycling GMP and indirectly, cGMP. This is Guanylate kinase from Helicobacter pylori (strain HPAG1).